A 324-amino-acid polypeptide reads, in one-letter code: NADH-cytochrome b5 reductase 1 (324 aa).

The chain crosses the membrane as a helical span at residues 49–69 (LNIVLAFVVGLIGSVVVLLYF). An FAD-binding FR-type domain is found at 81–184 (TQWQQYRLME…KGPKGQMRYA (104 aa)). Residues 164–179 (GSMKIGDLLSVKGPKG) and 190–222 (HIGMIAGGTGLTPCLQIIRAALKNPADKTQIDF) each bind FAD.

This sequence belongs to the flavoprotein pyridine nucleotide cytochrome reductase family. Monomer. Component of the 2-(3-amino-3-carboxypropyl)histidine synthase complex composed of DPH1, DPH2, DPH3 and a NADH-dependent reductase, predominantly CBR1. It depends on FAD as a cofactor.

The protein localises to the mitochondrion outer membrane. It carries out the reaction 2 Fe(III)-[cytochrome b5] + NADH = 2 Fe(II)-[cytochrome b5] + NAD(+) + H(+). The enzyme catalyses 2 Fe(3+)-[Dph3] + NADH = 2 Fe(2+)-[Dph3] + NAD(+) + H(+). It functions in the pathway protein modification; peptidyl-diphthamide biosynthesis. Its function is as follows. NADH-dependent reductase for DPH3 and cytochrome b5. Required for the first step of diphthamide biosynthesis, a post-translational modification of histidine which occurs in elongation factor 2. DPH1 and DPH2 transfer a 3-amino-3-carboxypropyl (ACP) group from S-adenosyl-L-methionine (SAM) to a histidine residue, the reaction is assisted by a reduction system comprising DPH3 and a NADH-dependent reductase, predominantly CBR1. By reducing DPH3, also involved in the formation of the tRNA wobble base modification mcm5s 2U (5-methoxycarbonylmethyl-2-thiouridine), mediated by the elongator complex. The cytochrome b5/NADH cytochrome b5 reductase electron transfer system supports the catalytic activity of several sterol biosynthetic enzymes. This chain is NADH-cytochrome b5 reductase 1 (CBR1), found in Mycosarcoma maydis (Corn smut fungus).